A 229-amino-acid chain; its full sequence is Heptaprenylglyceryl phosphate synthase (229 aa).

K12 lines the sn-glycerol 1-phosphate pocket. D14 and S40 together coordinate Mg(2+). Sn-glycerol 1-phosphate-binding positions include 159–164, G189, and 209–210; these read YLEYSG and GN.

It belongs to the GGGP/HepGP synthase family. Group I subfamily. As to quaternary structure, homodimer. Mg(2+) is required as a cofactor.

The enzyme catalyses sn-glycerol 1-phosphate + all-trans-heptaprenyl diphosphate = 3-heptaprenyl-sn-glycero-1-phosphate + diphosphate. It functions in the pathway membrane lipid metabolism; glycerophospholipid metabolism. Functionally, prenyltransferase that catalyzes in vivo the transfer of the heptaprenyl moiety of heptaprenyl pyrophosphate (HepPP; 35 carbon atoms) to the C3 hydroxyl of sn-glycerol-1-phosphate (G1P), producing heptaprenylglyceryl phosphate (HepGP). This reaction is an ether-bond-formation step in the biosynthesis of archaea-type G1P-based membrane lipids found in Bacillales. This Bacillus cereus (strain AH187) protein is Heptaprenylglyceryl phosphate synthase.